Consider the following 348-residue polypeptide: Mannonate dehydratase (348 aa).

The protein belongs to the mannonate dehydratase family. The cofactor is Fe(2+). It depends on Mn(2+) as a cofactor.

It catalyses the reaction D-mannonate = 2-dehydro-3-deoxy-D-gluconate + H2O. Its pathway is carbohydrate metabolism; pentose and glucuronate interconversion. Its function is as follows. Catalyzes the dehydration of D-mannonate. In Staphylococcus haemolyticus (strain JCSC1435), this protein is Mannonate dehydratase.